Reading from the N-terminus, the 214-residue chain is MSSAAAATRFIKCVTVGDGAVGKTCMLICYTCNKFPTDYIPTVFDNFSANVSVDGSVVNLGLWDTAGQEDYSRLRPLSYRGADVFILSFSLISRASYENVQKKWMPELRRFAPGVPVVLVGTKLDLREDRAYLADHPASSIITTEQGEELRKLIGAVAYIECSSKTQRNIKAVFDTAIKVVLQPPRHKDVTRKKLQSSSNRPVRRYFCGSACFA.

Residues G17–T24, A20–C25, T42, D64–Q68, G67, T122–D125, K123–D125, and S164–K165 each bind GTP. Positions Y39–F47 match the Effector region motif.

It belongs to the small GTPase superfamily. Rho family. In terms of assembly, may interact with MPK1/MAPK6. Binds to RBOHB, preferentially in the GTP-bound form. Interacts with CCR1 in a GTP-dependent manner. Post-translationally, may be palmitoylated.

It localises to the cytoplasm. The protein localises to the membrane. Functionally, small GTPase playing a general role in disease resistance signaling pathway. Acts downstream of heterotrimeric G protein alpha subunit. Regulates cell death and reactive oxygen species production, probably through NADPH oxidase. Also involved in sphingolipid elicitor (SE)-dependent defense signaling. Activates phytoalexin production and alters defense-related genes. Down-regulates metallothionein 2b, a reactive oxygen scavenger. May control lignin synthesis through regulation of both NADPH oxidase and CCR1 activities during defense responses. Stimulates lignin synthesis in suspension cell culture. The protein is Rac-like GTP-binding protein 1 (RAC1) of Oryza sativa subsp. japonica (Rice).